We begin with the raw amino-acid sequence, 316 residues long: Transaldolase (316 aa).

Lysine 131 functions as the Schiff-base intermediate with substrate in the catalytic mechanism.

It belongs to the transaldolase family. Type 1 subfamily. In terms of assembly, homodimer.

It is found in the cytoplasm. The enzyme catalyses D-sedoheptulose 7-phosphate + D-glyceraldehyde 3-phosphate = D-erythrose 4-phosphate + beta-D-fructose 6-phosphate. It functions in the pathway carbohydrate degradation; pentose phosphate pathway; D-glyceraldehyde 3-phosphate and beta-D-fructose 6-phosphate from D-ribose 5-phosphate and D-xylulose 5-phosphate (non-oxidative stage): step 2/3. In terms of biological role, transaldolase is important for the balance of metabolites in the pentose-phosphate pathway. The polypeptide is Transaldolase (Buchnera aphidicola subsp. Acyrthosiphon pisum (strain 5A)).